Reading from the N-terminus, the 324-residue chain is MNEPLVFMFSGQGSQYYHMGKELFKENTVFRQSMLEMDAIAARRIGTSIVEEIYHPGKRVSDPFDSILFSHPAIFMIEYSLYKVLEDRGIYPDYVLGSSLGEFAAAAVSGVSDAEDMLDCILEQAIIIQNSCDKGKMLAILDKPQLLNDHPQLFGNSELISINYDSHFVISGEEDHIRKIMEDLKEKQILCQLLPVSYAFHSSLIDPAESAYAEFLRSKSFQKPSIPIVSSLTGSCLHVMDENFFWNAVRKPMMFREAIRYLESQHTCKFIDLGPSGTLAAFVKQLIPGDSADRCCSIITPFHQELKNLNTVEYFRTPERKFTR.

Residue Ser99 is part of the active site.

It is found in the cytoplasm. It participates in antibiotic biosynthesis; bacillaene biosynthesis. Its function is as follows. Probably involved in some intermediate steps for the synthesis of the antibiotic polyketide bacillaene which is involved in secondary metabolism. This is Polyketide biosynthesis acyltransferase homolog PksD (pksD) from Bacillus subtilis (strain 168).